A 333-amino-acid chain; its full sequence is HTH-type transcriptional repressor PurR (333 aa).

In terms of domain architecture, HTH lacI-type spans 2–56 (ATIKDVAKMAGVSTTTVSHVINKTRFVAKETEQQVLQAIKNLNYSPSAVARSLKV). The H-T-H motif DNA-binding region spans 4–23 (IKDVAKMAGVSTTTVSHVIN). Residues 48 to 56 (SAVARSLKV) mediate DNA binding. Hypoxanthine-binding residues include Tyr-73, Lys-189, Thr-191, Phe-220, and Asp-274.

In terms of assembly, homodimer.

It participates in purine metabolism; purine nucleotide biosynthesis [regulation]. Its function is as follows. Is the main repressor of the genes involved in the de novo synthesis of purine nucleotides, regulating purB, purC, purEK, purF, purHD, purL, purMN and guaBA expression. PurR is allosterically activated to bind its cognate DNA by binding the purine corepressors, hypoxanthine or guanine, thereby effecting transcription repression. The chain is HTH-type transcriptional repressor PurR from Histophilus somni (strain 2336) (Haemophilus somnus).